Reading from the N-terminus, the 441-residue chain is Proline--tRNA ligase (441 aa).

This sequence belongs to the class-II aminoacyl-tRNA synthetase family. ProS type 2 subfamily. As to quaternary structure, homodimer.

It localises to the cytoplasm. It carries out the reaction tRNA(Pro) + L-proline + ATP = L-prolyl-tRNA(Pro) + AMP + diphosphate. Catalyzes the attachment of proline to tRNA(Pro) in a two-step reaction: proline is first activated by ATP to form Pro-AMP and then transferred to the acceptor end of tRNA(Pro). This is Proline--tRNA ligase from Methylorubrum populi (strain ATCC BAA-705 / NCIMB 13946 / BJ001) (Methylobacterium populi).